The following is a 254-amino-acid chain: Phosphatidylglycerol--prolipoprotein diacylglyceryl transferase (254 aa).

A run of 4 helical transmembrane segments spans residues 11–31 (LAIRWYGVVISIGAALGLLLA), 49–69 (FLIAFPSAIIGARLYYVIFEF), 84–104 (QGGLAIHGGIIFGVLAVYIYL), and 109–129 (ESFFEYVDVAAPSIILGQAIG). An a 1,2-diacyl-sn-glycero-3-phospho-(1'-sn-glycerol)-binding site is contributed by Arg-130. The next 3 membrane-spanning stretches (helical) occupy residues 169-189 (PTFLYESIWNFIVCIFLVYLL), 196-216 (GIVFMAYIGLYSLGRFFIEGL), and 228-248 (VAQLISVLGIILSIFFIYNII).

Belongs to the Lgt family.

It localises to the cell membrane. The catalysed reaction is L-cysteinyl-[prolipoprotein] + a 1,2-diacyl-sn-glycero-3-phospho-(1'-sn-glycerol) = an S-1,2-diacyl-sn-glyceryl-L-cysteinyl-[prolipoprotein] + sn-glycerol 1-phosphate + H(+). It participates in protein modification; lipoprotein biosynthesis (diacylglyceryl transfer). Its function is as follows. Catalyzes the transfer of the diacylglyceryl group from phosphatidylglycerol to the sulfhydryl group of the N-terminal cysteine of a prolipoprotein, the first step in the formation of mature lipoproteins. The chain is Phosphatidylglycerol--prolipoprotein diacylglyceryl transferase from Clostridium botulinum (strain Langeland / NCTC 10281 / Type F).